The chain runs to 171 residues: Protein phosphatase 1 regulatory subunit 1A (171 aa).

M1 bears the N-acetylmethionine mark. Positions 1 to 171 (MEPDNSPRKI…PLDSQGASLV (171 aa)) are disordered. Positions 9–12 (KIQF) are essential for activity. Positions 19 to 29 (PHLDPEAAEQI) are enriched in basic and acidic residues. At T35 the chain carries Phosphothreonine. The tract at residues 42-54 (TSDQSSPEIDEDR) is essential for activity. 4 positions are modified to phosphoserine: S43, S46, S47, and S67. Polar residues predominate over residues 122–146 (GSASRPDTPGTAQKSAESNPKTQEQ). Residues 143 to 171 (TQEQCGVEPRTEDSSAHMLPLDSQGASLV) are interaction with PPP1R15A.

Belongs to the protein phosphatase inhibitor 1 family. In terms of assembly, interacts with PPP1R15A. Post-translationally, phosphorylation of Thr-35 is required for activity.

Inhibitor of protein-phosphatase 1. This protein may be important in hormonal control of glycogen metabolism. Hormones that elevate intracellular cAMP increase I-1 activity in many tissues. I-1 activation may impose cAMP control over proteins that are not directly phosphorylated by PKA. Following a rise in intracellular calcium, I-1 is inactivated by calcineurin (or PP2B). Does not inhibit type-2 phosphatases. The sequence is that of Protein phosphatase 1 regulatory subunit 1A (Ppp1r1a) from Mus musculus (Mouse).